We begin with the raw amino-acid sequence, 64 residues long: Purotoxin-2 (64 aa).

The knottin domain stretch occupies residues 1-44; it reads AKACTPLLHDCSHDRHSCCRGDMFKYVCDCFYPEGEDKTEVCSC. Disulfide bonds link cysteine 4–cysteine 19, cysteine 11–cysteine 28, cysteine 18–cysteine 44, and cysteine 30–cysteine 42. Residues 45 to 64 form a linear cationic cytotoxin domain region; it reads QQPKSHKIAEKIIDKAKTTL. Position 64 is a leucine amide (leucine 64).

It belongs to the neurotoxin 19 (CSTX) family. 05 (U4-Lctx) subfamily. Amidation at Leu-64 is not mandatory for activity on P2RX3. In terms of tissue distribution, expressed by the venom gland.

It localises to the secreted. Its function is as follows. Enhances the high-affinity desensitization of human P2RX3 purinoceptors. At 50 nM, the toxin decreases the IC(50) for ambient ATP from 2.67 nM to 0.77 nM in human P2RX3. This is Purotoxin-2 from Alopecosa marikovskyi (Wolf spider).